The following is a 598-amino-acid chain: Aspartate--tRNA(Asp/Asn) ligase (598 aa).

Glutamate 173 lines the L-aspartate pocket. Positions 197 to 200 (QLFK) are aspartate. L-aspartate is bound at residue arginine 219. Residues 219 to 221 (RDE) and glutamine 228 each bind ATP. Histidine 448 is a binding site for L-aspartate. Glutamate 482 is an ATP binding site. Residue arginine 489 participates in L-aspartate binding. 534–537 (GWDR) is an ATP binding site. The disordered stretch occupies residues 560–598 (GYDPLTAAPAPITAQQRKEAGVDAKPETKKAAAGEPAGA). Residues 575–591 (QRKEAGVDAKPETKKAA) show a composition bias toward basic and acidic residues.

The protein belongs to the class-II aminoacyl-tRNA synthetase family. Type 1 subfamily. Homodimer.

The protein localises to the cytoplasm. The enzyme catalyses tRNA(Asx) + L-aspartate + ATP = L-aspartyl-tRNA(Asx) + AMP + diphosphate. Its function is as follows. Aspartyl-tRNA synthetase with relaxed tRNA specificity since it is able to aspartylate not only its cognate tRNA(Asp) but also tRNA(Asn). Reaction proceeds in two steps: L-aspartate is first activated by ATP to form Asp-AMP and then transferred to the acceptor end of tRNA(Asp/Asn). The polypeptide is Aspartate--tRNA(Asp/Asn) ligase (Kineococcus radiotolerans (strain ATCC BAA-149 / DSM 14245 / SRS30216)).